A 204-amino-acid chain; its full sequence is Holliday junction branch migration complex subunit RuvA (204 aa).

The segment at 1–64 is domain I; that stretch reads MIGKLKGTID…EDQLKLFGFM (64 aa). The segment at 65-143 is domain II; it reads TALEREWFNL…AYAGEAINIA (79 aa). The tract at residues 144-151 is flexible linker; that stretch reads LKRELGEG. The segment at 152 to 204 is domain III; sequence VAAAPVADAVSALTNLGYSRDQAANAVAAAMKTAGEGADSAKLIRLGLKELAR.

The protein belongs to the RuvA family. As to quaternary structure, homotetramer. Forms an RuvA(8)-RuvB(12)-Holliday junction (HJ) complex. HJ DNA is sandwiched between 2 RuvA tetramers; dsDNA enters through RuvA and exits via RuvB. An RuvB hexamer assembles on each DNA strand where it exits the tetramer. Each RuvB hexamer is contacted by two RuvA subunits (via domain III) on 2 adjacent RuvB subunits; this complex drives branch migration. In the full resolvosome a probable DNA-RuvA(4)-RuvB(12)-RuvC(2) complex forms which resolves the HJ.

Its subcellular location is the cytoplasm. In terms of biological role, the RuvA-RuvB-RuvC complex processes Holliday junction (HJ) DNA during genetic recombination and DNA repair, while the RuvA-RuvB complex plays an important role in the rescue of blocked DNA replication forks via replication fork reversal (RFR). RuvA specifically binds to HJ cruciform DNA, conferring on it an open structure. The RuvB hexamer acts as an ATP-dependent pump, pulling dsDNA into and through the RuvAB complex. HJ branch migration allows RuvC to scan DNA until it finds its consensus sequence, where it cleaves and resolves the cruciform DNA. The sequence is that of Holliday junction branch migration complex subunit RuvA from Rhizobium etli (strain ATCC 51251 / DSM 11541 / JCM 21823 / NBRC 15573 / CFN 42).